The sequence spans 1404 residues: Proteoglycan 4 (1404 aa).

The signal sequence occupies residues 1 to 24 (MAWKTLPIYLLLLLSVFVIQQVSS). 2 SMB domains span residues 26–69 (DLSS…AELS) and 66–108 (AELS…AEVH). 14 disulfide bridges follow: cysteine 30-cysteine 34, cysteine 30-cysteine 46, cysteine 34-cysteine 64, cysteine 44-cysteine 46, cysteine 44-cysteine 57, cysteine 50-cysteine 56, cysteine 57-cysteine 64, cysteine 70-cysteine 74, cysteine 70-cysteine 86, cysteine 74-cysteine 104, cysteine 84-cysteine 86, cysteine 84-cysteine 97, cysteine 90-cysteine 96, and cysteine 97-cysteine 104. Residues 111–966 (TSPPSSKKAP…TTQVTSTTTQ (856 aa)) are disordered. O-linked (GalNAc...) serine glycans are attached at residues serine 123 and serine 136. The segment covering 132–146 (TTKRSPKPPNKKKTK) has biased composition (basic residues). Residues 166–177 (SSSSSSSSSSSS) are compositionally biased toward low complexity. Residues 193-205 (ELQKKLKVKDNKK) show a composition bias toward basic and acidic residues. N-linked (GlcNAc...) asparagine glycosylation occurs at asparagine 206. Over residues 235–252 (TPDTSTTQHNKVSTSPKI) the composition is skewed to polar residues. 2 O-linked (GalNAc...) threonine glycosylation sites follow: threonine 240 and threonine 253. The segment covering 266–276 (PNSDTSKETSL) has biased composition (polar residues). O-linked (GalNAc...) threonine glycosylation is found at threonine 277, threonine 291, and threonine 305. The O-linked (GalNAc...) serine glycan is linked to serine 306. The O-linked (GalNAc...) threonine glycan is linked to threonine 310. An O-linked (GalNAc...) serine glycan is attached at serine 317. O-linked (GalNAc...) threonine glycans are attached at residues threonine 324, threonine 332, and threonine 338. Low complexity-rich tracts occupy residues 329–348 (AKPTPKAETTTKGPALTTPK) and 356–405 (KEPA…KEPA). Copy 1 of the repeat occupies 348-355 (KEPTPTTP). The interval 348–855 (KEPTPTTPKE…TPETPPPTTS (508 aa)) is 59 X 8 AA repeats of K-X-P-X-P-T-T-X. One copy of the 2; approximate repeat lies at 356–363 (KEPASTTP). Residues 364-371 (KEPTPTTI) form repeat 3. Threonine 367 is a glycosylation site (O-linked (GalNAc...) threonine). A 4; approximate repeat occupies 372-378 (KSAPTTP). A glycan (O-linked (GalNAc...) serine) is linked at serine 373. O-linked (GalNAc...) threonine glycosylation is found at threonine 376, threonine 384, and threonine 385. Repeat 5 spans residues 379 to 386 (KEPAPTTT). A 6; approximate repeat occupies 387–393 (KSAPTTP). O-linked (GalNAc...) serine glycosylation occurs at serine 388. Residues threonine 391, threonine 399, threonine 400, threonine 407, threonine 408, threonine 415, and threonine 423 are each glycosylated (O-linked (GalNAc...) threonine). 4 tandem repeats follow at residues 394 to 401 (KEPAPTTT), 402 to 409 (KEPAPTTP), 410 to 417 (KEPAPTTT), and 418 to 425 (KEPAPTTT). Residues 413–431 (APTTTKEPAPTTTKSAPTT) are compositionally biased toward low complexity. The stretch at 426–432 (KSAPTTP) is one 11; approximate repeat. Serine 427 carries O-linked (GalNAc...) serine glycosylation. Threonine 430, threonine 438, threonine 439, threonine 446, threonine 447, threonine 454, and threonine 455 each carry an O-linked (GalNAc...) threonine glycan. 2 stretches are compositionally biased toward pro residues: residues 432–467 (PKEPAPTTPKKPAPTTPKEPAPTTPKEPTPTTPKEP) and 476–506 (PTTPKEPAPTAPKKPAPTTPKEPAPTTPKEP). Tandem repeats lie at residues 433–440 (KEPAPTTP), 441–448 (KKPAPTTP), 449–456 (KEPAPTTP), and 457–464 (KEPTPTTP). A 16; approximate repeat occupies 465 to 471 (KEPAPTT). Copy 17 of the repeat occupies 472–479 (KEPAPTTP). 8 O-linked (GalNAc...) threonine glycosylation sites follow: threonine 477, threonine 478, threonine 485, threonine 493, threonine 494, threonine 501, threonine 502, and threonine 509. Residues 480-487 (KEPAPTAP) form an 18; approximate repeat. Residues 488–495 (KKPAPTTP) form a 19; approximate repeat. 4 tandem repeats follow at residues 496-503 (KEPAPTTP), 504-511 (KEPAPTTT), 512-519 (KEPSPTTP), and 520-527 (KEPAPTTT). Residues 523–561 (APTTTKSAPTTTKEPAPTTTKSAPTTPKEPSPTTTKEPA) are compositionally biased toward low complexity. A glycan (O-linked (GalNAc...) threonine) is linked at threonine 525. Residues 528 to 534 (KSAPTTT) form a 24; approximate repeat. An O-linked (GalNAc...) serine glycan is attached at serine 529. 3 O-linked (GalNAc...) threonine glycosylation sites follow: threonine 532, threonine 540, and threonine 541. Repeat 25 spans residues 535–542 (KEPAPTTT). Residues 543 to 549 (KSAPTTP) form a 26; approximate repeat. Tandem repeats lie at residues 550–557 (KEPSPTTT), 558–565 (KEPAPTTP), 566–573 (KEPAPTTP), 574–581 (KKPAPTTP), 582–589 (KEPAPTTP), and 590–597 (KEPAPTTT). Serine 553 carries O-linked (GalNAc...) serine glycosylation. O-linked (GalNAc...) threonine glycans are attached at residues threonine 555, threonine 563, threonine 564, threonine 571, threonine 572, threonine 579, threonine 580, threonine 587, threonine 588, threonine 595, threonine 603, threonine 604, threonine 611, threonine 612, threonine 616, threonine 619, and threonine 627. A compositionally biased stretch (pro residues) spans 562-592 (PTTPKEPAPTTPKKPAPTTPKEPAPTTPKEP). The stretch at 598 to 605 (KKPAPTTP) is one 33; approximate repeat. Over residues 602–611 (PTTPKEPAPT) the composition is skewed to pro residues. The stretch at 606 to 613 (KEPAPTTP) is repeat 34. Over residues 612 to 636 (TPKETAPTTPKKLTPTTPEKLAPTT) the composition is skewed to low complexity. Residues 614-621 (KETAPTTP) form a 35; approximate repeat. The stretch at 622 to 629 (KKLTPTTP) is one 36; approximate repeat. The 37; approximate repeat unit spans residues 638-645 (EKPAPTTP). Residues 653 to 667 (PEEPTPTTPEEPAPT) show a composition bias toward pro residues. A 38; approximate repeat occupies 662 to 669 (EEPAPTTP). O-linked (GalNAc...) threonine glycosylation is found at threonine 676, threonine 683, threonine 684, threonine 691, threonine 692, threonine 699, threonine 700, threonine 704, and threonine 707. A compositionally biased stretch (pro residues) spans 677–699 (PKEPAPTTPKEPAPTTPKEPAPT). A run of 3 repeats spans residues 678–685 (KEPAPTTP), 686–693 (KEPAPTTP), and 694–701 (KEPAPTTP). Residues 700–721 (TPKETAPTTPKGTAPTTLKEPA) show a composition bias toward low complexity. A 42; approximate repeat occupies 702–709 (KETAPTTP). The stretch at 710–717 (KGTAPTTL) is one 43; approximate repeat. Copy 44 of the repeat occupies 718–725 (KEPAPTTP). 3 O-linked (GalNAc...) threonine glycosylation sites follow: threonine 723, threonine 724, and threonine 736. Over residues 728–761 (PAPKELAPTTTKEPTSTTSDKPAPTTPKGTAPTT) the composition is skewed to low complexity. A 45; approximate repeat occupies 731-738 (KELAPTTT). A 46; approximate repeat occupies 739-746 (KEPTSTTS). Residues 747–754 (DKPAPTTP) form a 47; approximate repeat. Residues 755-762 (KGTAPTTP) form a 48; approximate repeat. Over residues 762–776 (PKEPAPTTPKEPAPT) the composition is skewed to pro residues. 2 repeat units span residues 763–770 (KEPAPTTP) and 771–778 (KEPAPTTP). O-linked (GalNAc...) threonine glycans are attached at residues threonine 768, threonine 769, threonine 776, and threonine 777. Over residues 777–790 (TPKGTAPTTLKEPA) the composition is skewed to low complexity. Residues 779-786 (KGTAPTTL) form a 51; approximate repeat. Copy 52 of the repeat occupies 787-794 (KEPAPTTP). Threonine 792, threonine 793, and threonine 805 each carry an O-linked (GalNAc...) threonine glycan. Positions 797-830 (PAPKELAPTTTKGPTSTTSDKPAPTTPKETAPTT) are enriched in low complexity. A 53; approximate repeat occupies 800–807 (KELAPTTT). The stretch at 808–815 (KGPTSTTS) is one 54; approximate repeat. Serine 812 carries an O-linked (GalNAc...) serine glycan. The stretch at 816-823 (DKPAPTTP) is one 55; approximate repeat. One copy of the 56; approximate repeat lies at 824–831 (KETAPTTP). O-linked (GalNAc...) threonine glycosylation is found at threonine 829, threonine 837, and threonine 838. The segment covering 831-853 (PKEPAPTTPKKPAPTTPETPPPT) has biased composition (pro residues). Repeat copies occupy residues 832–839 (KEPAPTTP) and 840–847 (KKPAPTTP). Residues 848 to 855 (ETPPPTTS) form a 59; approximate repeat. Positions 854–866 (TSEVSTPTTTKEP) are enriched in low complexity. Serine 892 carries an O-linked (GalNAc...) serine glycan. Over residues 899–914 (PTTKTPAATKPEMTTT) the composition is skewed to low complexity. Residue threonine 900 is glycosylated (O-linked (GalNAc...) threonine). Positions 915-926 (AKDKTTERDLRT) are enriched in basic and acidic residues. The segment covering 927–966 (TPETTTAAPKMTKETATTTEKTTESKITATTTQVTSTTTQ) has biased composition (low complexity). 2 O-linked (GalNAc...) threonine glycosylation sites follow: threonine 930 and threonine 931. The O-linked (GalNAc...) serine glycan is linked to serine 962. Residues threonine 963, threonine 968, threonine 975, threonine 978, threonine 979, and threonine 980 are each glycosylated (O-linked (GalNAc...) threonine). The segment at 992–1104 (ITTTEIMNKP…EDAGGAEGET (113 aa)) is disordered. Residues 999–1012 (NKPEETAKPKDRAT) are compositionally biased toward basic and acidic residues. Residues 1026–1047 (KAPKKPTSTKKPKTMPRVRKPK) show a composition bias toward basic residues. Residue threonine 1039 is glycosylated (O-linked (GalNAc...) threonine). Positions 1048-1060 (TTPTPRKMTSTMP) are enriched in low complexity. Polar residues predominate over residues 1073-1085 (LQTTTRPNQTPNS). Cysteine 1146 and cysteine 1403 are oxidised to a cystine. Hemopexin repeat units follow at residues 1148-1191 (GKPV…VWGI) and 1192-1239 (PSPI…FGGL). Asparagine 1159 carries an N-linked (GlcNAc...) asparagine glycan. An O-linked (GalNAc...) threonine glycan is attached at threonine 1161.

As to quaternary structure, homodimer; disulfide-linked. In terms of processing, N-glycosylated. O-glycosylated; contains glycosaminoglycan chondroitin sulfate and keratan sulfate. O-glycosylated with sialylated oligosaccharides which are predominantly represented by the monosialylated core type I structure, NeuNAcalpha2-3Galbeta1-3GalNAc, with smaller amounts of disialylated O-glycans. Post-translationally, the disulfide bond between Cys-1146 and Cys-1403 is essential for protein cleavage. In terms of processing, proteolytically cleaved by cathepsin CTSG. Highly expressed in synovial tissue, cartilage and liver and weakly in heart and lung. Isoform B is expressed in kidney, lung, liver, heart and brain. Isoform C and isoform D are widely expressed.

The protein localises to the secreted. Its function is as follows. Plays a role in boundary lubrication within articulating joints. Prevents protein deposition onto cartilage from synovial fluid by controlling adhesion-dependent synovial growth and inhibiting the adhesion of synovial cells to the cartilage surface. In terms of biological role, isoform F plays a role as a growth factor acting on the primitive cells of both hematopoietic and endothelial cell lineages. This is Proteoglycan 4 (PRG4) from Homo sapiens (Human).